A 427-amino-acid polypeptide reads, in one-letter code: Extracellular superoxide dismutase [Cu-Zn] 2 (427 aa).

Residues Met-1 to Ala-20 form the signal peptide. Residues Asp-21–Ser-406 are Extracellular-facing. Asn-38, Asn-57, Asn-81, Asn-190, and Asn-218 each carry an N-linked (GlcNAc...) asparagine glycan. Residues His-257, His-259, and His-275 each contribute to the Cu cation site. Residues His-275 and His-283 each coordinate Zn(2+). Asn-288 is a glycosylation site (N-linked (GlcNAc...) asparagine). Zn(2+) is bound by residues His-292 and Asp-295. A Cu cation-binding site is contributed by His-331. N-linked (GlcNAc...) asparagine glycosylation is present at Asn-376. Residues Gly-381 to Gly-404 are disordered. Residues Pro-395–Gly-404 show a composition bias toward low complexity. A helical transmembrane segment spans residues Ser-407 to Ile-426. Residue Leu-427 is a topological domain, cytoplasmic.

It belongs to the Cu-Zn superoxide dismutase family. It depends on Cu cation as a cofactor. The cofactor is Zn(2+).

It localises to the cell membrane. It catalyses the reaction 2 superoxide + 2 H(+) = H2O2 + O2. In terms of biological role, protect the extracellular space from toxic effect of reactive oxygen intermediates by converting superoxyde radicals into hydrogen peroxyde and oxygen. This Dictyostelium discoideum (Social amoeba) protein is Extracellular superoxide dismutase [Cu-Zn] 2 (sodB).